The primary structure comprises 170 residues: Myosin regulatory light chain 2, skeletal muscle isoform (170 aa).

Residue A2 is modified to N,N,N-trimethylalanine. Residues S16 and S17 each carry the phosphoserine modification. T26 and T36 each carry phosphothreonine. The EF-hand 1 domain occupies T26–L61. Residues D39, N41, D43, and D50 each coordinate Ca(2+). Position 76 is a phosphoserine (S76). EF-hand domains follow at residues D96–R131 and F132–K167. T102 bears the Phosphothreonine mark.

As to quaternary structure, myosin is a hexamer of 2 heavy chains and 4 light chains.

Functionally, plays a role in muscle contraction. This is Myosin regulatory light chain 2, skeletal muscle isoform from Bos taurus (Bovine).